We begin with the raw amino-acid sequence, 642 residues long: Phosphomethylpyrimidine synthase (642 aa).

Substrate is bound by residues Asn-235, Met-264, Tyr-293, His-329, 349–351 (SRG), 390–393 (DGLR), and Glu-429. Residue His-433 participates in Zn(2+) binding. Tyr-456 is a substrate binding site. His-497 contributes to the Zn(2+) binding site. [4Fe-4S] cluster-binding residues include Cys-577, Cys-580, and Cys-585.

It belongs to the ThiC family. Homodimer. [4Fe-4S] cluster is required as a cofactor.

The enzyme catalyses 5-amino-1-(5-phospho-beta-D-ribosyl)imidazole + S-adenosyl-L-methionine = 4-amino-2-methyl-5-(phosphooxymethyl)pyrimidine + CO + 5'-deoxyadenosine + formate + L-methionine + 3 H(+). The protein operates within cofactor biosynthesis; thiamine diphosphate biosynthesis. Its function is as follows. Catalyzes the synthesis of the hydroxymethylpyrimidine phosphate (HMP-P) moiety of thiamine from aminoimidazole ribotide (AIR) in a radical S-adenosyl-L-methionine (SAM)-dependent reaction. This Alteromonas mediterranea (strain DSM 17117 / CIP 110805 / LMG 28347 / Deep ecotype) protein is Phosphomethylpyrimidine synthase.